The sequence spans 122 residues: Large ribosomal subunit protein bL12 (122 aa).

This sequence belongs to the bacterial ribosomal protein bL12 family. In terms of assembly, homodimer. Part of the ribosomal stalk of the 50S ribosomal subunit. Forms a multimeric L10(L12)X complex, where L10 forms an elongated spine to which 2 to 4 L12 dimers bind in a sequential fashion. Binds GTP-bound translation factors.

In terms of biological role, forms part of the ribosomal stalk which helps the ribosome interact with GTP-bound translation factors. Is thus essential for accurate translation. This chain is Large ribosomal subunit protein bL12, found in Cellvibrio japonicus (strain Ueda107) (Pseudomonas fluorescens subsp. cellulosa).